The following is a 1732-amino-acid chain: Transient receptor potential cation channel subfamily M member 3 (1732 aa).

The Cytoplasmic segment spans residues 1 to 894; that stretch reads MPGPWGTVYF…RKIYEFYNAP (894 aa). Calmodulin-binding regions lie at residues 41–64, 192–215, 300–323, 601–624, and 793–816; these read WTIR…QKSW, NFEL…MTTG, TGKY…QKIN, RKRF…KLLG, and RKNS…LEFK. The tract at residues 617–625 is required for the inhibitory action of G-beta/gamma-subunits of heterotrimeric G-proteins; sequence PKALKLLGM. Residue Ser796 coordinates 1,2-dioctanoyl-sn-glycero-3-phospho-(1D-myo-inositol-4,5-bisphosphate). The interval 829–851 is disordered; that stretch reads EIHLQEKEPEEPEKPTKEKDEED. Residues 831–847 are compositionally biased toward basic and acidic residues; it reads HLQEKEPEEPEKPTKEK. A helical transmembrane segment spans residues 895-918; it reads IVKFWFYTLAYIGYLMLFNYIVLV. The Extracellular segment spans residues 919–925; that stretch reads KMERWPS. Residues 926-948 traverse the membrane as a helical segment; the sequence is TQEWIVISYIFTLGIEKMREILM. The Cytoplasmic portion of the chain corresponds to 949 to 964; the sequence is SEPGKLLQKVKVWLQE. The helical transmembrane segment at 965-985 threads the bilayer; it reads YWNVTDLIAILLFSVGMILRL. The Extracellular segment spans residues 986–989; sequence QDQP. The chain crosses the membrane as a helical span at residues 990–1013; it reads FRSDGRVIYCVNIIYWYIRLLDIF. The Cytoplasmic segment spans residues 1014 to 1028; that stretch reads GVNKYLGPYVMMIGK. 1,2-dioctanoyl-sn-glycero-3-phospho-(1D-myo-inositol-4,5-bisphosphate)-binding residues include Lys1017 and Tyr1018. The chain crosses the membrane as a helical span at residues 1029-1056; that stretch reads MMIDMMYFVIIMLVVLMSFGVARQAILF. The Extracellular segment spans residues 1057-1073; the sequence is PNEEPSWKLAKNIFYMP. Positions 1074 to 1101 form an intramembrane region, pore-forming; sequence YWMIYGEVFADQIDPPCGQNETREDGKT. Residues 1102–1111 are Extracellular-facing; the sequence is IQLPPCKTGA. The helical transmembrane segment at 1112 to 1137 threads the bilayer; it reads WIVPAIMACYLLVANILLVNLLIAVF. Topologically, residues 1138-1732 are cytoplasmic; that stretch reads NNTFFEVKSI…AFHSFESKHN (595 aa). Positions 1610-1732 are disordered; sequence EREAELSHPS…AFHSFESKHN (123 aa). Polar residues-rich tracts occupy residues 1635-1653 and 1690-1701; these read PISS…NNIT and NTASLRNPFQRS.

It belongs to the transient receptor (TC 1.A.4) family. LTrpC subfamily. TRPM3 sub-subfamily. Homotetramer. Interacts with TRPM1; the interaction results in the formation of a heteromultimeric cation channel complex that are functionally different from the homomeric channels.

It is found in the cell membrane. The enzyme catalyses Ca(2+)(in) = Ca(2+)(out). It catalyses the reaction Mn(2+)(in) = Mn(2+)(out). It carries out the reaction Zn(2+)(in) = Zn(2+)(out). The catalysed reaction is Mg(2+)(in) = Mg(2+)(out). The enzyme catalyses Na(+)(in) = Na(+)(out). Its activity is regulated as follows. Activated by the neurosteroid pregnelonone sulfate (PregS). PregS activates the channel by shifting its current-voltage activation curve toward more negative membrane potentials and also potentiates temperature-induced activation. Activated by heat. Intracellular Ca(2+) inhibits TRPM3 probably via interaction with Ca(2+)/calmodulin. Intracellular Mg(2+) inhibits TRPM3 activity. Both intracellular and extracellular protons block TRPM3 through propable binding sites in the pore region. Positively regulated by phosphoinositide phosphoinositol 4,5-biphosphate (PI(4,5)P2). Strongly inhibited by activation of G(i)-coupled receptors via direct binding with G-beta/gamma-subunits of heterotrimeric G-proteins. With respect to regulation, insensitive to pregnenolone sulfate (PregS) or heat. Not inhibited by G-beta/gamma-subunits of heterotrimeric G-proteins. Its function is as follows. Constitutively active, non-selective divalent cation-conducting channel that is permeable to Ca(2+), Mn(2+), and Mg(2+), with a high permeability for Ca(2+). However, can be enhanced by increasing temperature and by ligands, including the endogenous neurosteroid pregnenolone sulfate and sphingosine-1 and suppressed by intracellular Mg(2+). Implicated in a variety of cellular processes, including insulin/peptide secretion, vascular constriction and dilation, noxious heat sensing, inflammatory and spontaneous pain sensitivity. In neurons of the dorsal root ganglia, functions as thermosensitive channel for the detection of noxious heat and spontaneous pain. Suggested to function as an ionotropic steroid receptor in beta-cell, indeed pregnenolone sulfate leads to Ca(2+) influx and enhanced insulin secretion. Mediates Zn(2+) uptake into the lumen of pancreatic beta cell secretory granules, thereby regulating insulin secretion. Forms heteromultimeric ion channels with TRPM1 which are permeable for Ca(2+) and Zn(2+) ions. Exists as multiple splice variants which differ significantly in their biophysical properties. Displays strongly reduced permeability for divalent cations and high selectivity toward monovalent cations. In terms of biological role, no channel activity. The sequence is that of Transient receptor potential cation channel subfamily M member 3 from Mus musculus (Mouse).